Here is a 910-residue protein sequence, read N- to C-terminus: Staphylococcal nuclease domain-containing protein 1 (910 aa).

The residue at position 2 (Ala2) is an N-acetylalanine. TNase-like domains follow at residues Thr18–Glu166, Lys193–Asp328, and Lys341–Lys496. Thr103 carries the post-translational modification Phosphothreonine. Position 193 is an N6-acetyllysine (Lys193). A phosphothreonine mark is found at Thr235 and Thr240. 2 consecutive short sequence motifs (nuclear localization signal) follow at residues Arg321–Ile325 and Lys388–Pro392. Ser426 is subject to Phosphoserine. A Glycyl lysine isopeptide (Lys-Gly) (interchain with G-Cter in SUMO2) cross-link involves residue Lys513. Residues Gly525 to His660 form the TNase-like 4 domain. Position 641 is an N6-acetyllysine (Lys641). Residue Ser645 is modified to Phosphoserine. The region spanning Ala729 to Arg787 is the Tudor domain. Thr779 is subject to Phosphothreonine. Residues Ser785 and Ser909 each carry the phosphoserine modification.

In terms of assembly, forms a ternary complex with STAT6 and POLR2A. Associates with the RNA-induced silencing complex (RISC). Interacts with the RISC components AGO2, FMR1 and TNRC6A. Interacts with GTF2E1 and GTF2E2. Interacts with PIM1. Interacts with STAT5. Interacts with SYT11 (via C2 2 domain); the interaction with SYT11 is direct. In terms of processing, phosphorylated by PIM1 in vitro.

The protein localises to the cytoplasm. The protein resides in the nucleus. It is found in the melanosome. It catalyses the reaction Endonucleolytic cleavage to nucleoside 3'-phosphates and 3'-phosphooligonucleotide end-products.. Functionally, endonuclease that mediates miRNA decay of both protein-free and AGO2-loaded miRNAs. As part of its function in miRNA decay, regulates mRNAs involved in G1-to-S phase transition. Functions as a bridging factor between STAT6 and the basal transcription factor. Plays a role in PIM1 regulation of MYB activity. Functions as a transcriptional coactivator for STAT5. The protein is Staphylococcal nuclease domain-containing protein 1 (Snd1) of Mus musculus (Mouse).